The sequence spans 124 residues: MSMNPIKKTEETVAAPAVNKISITLTSRNPKSLEKVCADIITLAKNKKVKAKGPIRIPNKVLKITTRKSPCGEGTNTWDRFEMRIHKRVIHILSTQDFVKEMNTISIEAGVDVEVIMDKKEAKN.

Belongs to the universal ribosomal protein uS10 family.

The polypeptide is Small ribosomal subunit protein uS10 (rps20) (Dictyostelium discoideum (Social amoeba)).